The following is a 92-amino-acid chain: Small ribosomal subunit protein uS19 (92 aa).

The protein belongs to the universal ribosomal protein uS19 family.

Protein S19 forms a complex with S13 that binds strongly to the 16S ribosomal RNA. This is Small ribosomal subunit protein uS19 from Cellvibrio japonicus (strain Ueda107) (Pseudomonas fluorescens subsp. cellulosa).